The chain runs to 412 residues: Maintenance of mitochondrial morphology protein 1 (412 aa).

Topologically, residues 1 to 81 (MTKELIKTEA…PANNWTFTQG (81 aa)) are lumenal. The helical transmembrane segment at 82–102 (LVLGQISVIFIIIVFVKFFVF) threads the bilayer. Residues 103-412 (ADSSTIPTKK…RSDSGTSENL (310 aa)) lie on the Cytoplasmic side of the membrane. The 218-residue stretch at 165–382 (SPESLDWFNV…EPRFQVVRLP (218 aa)) folds into the SMP-LTD domain. Residues 389–412 (KNTREPINKKTSVSRSDSGTSENL) form a disordered region. Polar residues predominate over residues 397–412 (KKTSVSRSDSGTSENL).

Belongs to the MMM1 family. In terms of assembly, homodimer. Component of the ER-mitochondria encounter structure (ERMES) or MDM complex, composed of MMM1, MDM10, MDM12 and MDM34. An MMM1 homodimer associates with one molecule of MDM12 on each side in a pairwise head-to-tail manner, and the SMP-LTD domains of MMM1 and MDM12 generate a continuous hydrophobic tunnel for phospholipid trafficking.

Its subcellular location is the endoplasmic reticulum membrane. Its function is as follows. Component of the ERMES/MDM complex, which serves as a molecular tether to connect the endoplasmic reticulum (ER) and mitochondria. Components of this complex are involved in the control of mitochondrial shape and protein biogenesis, and function in nonvesicular lipid trafficking between the ER and mitochondria. The MDM12-MMM1 subcomplex functions in the major beta-barrel assembly pathway that is responsible for biogenesis of all outer membrane beta-barrel proteins, and acts in a late step after the SAM complex. The MDM10-MDM12-MMM1 subcomplex further acts in the TOM40-specific pathway after the action of the MDM12-MMM1 complex. Essential for establishing and maintaining the structure of mitochondria and maintenance of mtDNA nucleoids. The protein is Maintenance of mitochondrial morphology protein 1 of Candida tropicalis (strain ATCC MYA-3404 / T1) (Yeast).